A 587-amino-acid chain; its full sequence is L-ascorbate oxidase (587 aa).

Residues 1–33 (MAKVADKPFFPKPFLSFLVLSIIFGFGITLSEA) form the signal peptide. 2 consecutive Plastocyanin-like domains span residues 38 to 157 (IKHY…LIVD) and 169 to 335 (DEEI…NYLP). 3 disulfide bridges follow: Cys54/Cys236, Cys116/Cys574, and Cys215/Cys228. Cu cation contacts are provided by His95, His97, His139, and His141. N-linked (GlcNAc...) asparagine glycosylation is found at Asn360, Asn401, and Asn475. The 181-residue stretch at 379 to 559 (NRRLFLLNTQ…HMGMGVVFAE (181 aa)) folds into the Plastocyanin-like 3 domain. Residues His480, His483, His485, His542, Cys543, His544, His548, and Met553 each contribute to the Cu cation site.

It belongs to the multicopper oxidase family. As to quaternary structure, dimer. Requires Cu cation as cofactor.

The protein resides in the secreted. It carries out the reaction 4 L-ascorbate + O2 = 4 monodehydro-L-ascorbate radical + 2 H2O. Its function is as follows. May be involved in a redox system involving ascorbic acid. This is L-ascorbate oxidase from Cucumis sativus (Cucumber).